The primary structure comprises 481 residues: Proline--tRNA ligase 2 (481 aa).

This sequence belongs to the class-II aminoacyl-tRNA synthetase family. ProS type 3 subfamily. In terms of assembly, homodimer.

Its subcellular location is the cytoplasm. The catalysed reaction is tRNA(Pro) + L-proline + ATP = L-prolyl-tRNA(Pro) + AMP + diphosphate. Its function is as follows. Catalyzes the attachment of proline to tRNA(Pro) in a two-step reaction: proline is first activated by ATP to form Pro-AMP and then transferred to the acceptor end of tRNA(Pro). This is Proline--tRNA ligase 2 from Clostridioides difficile (strain 630) (Peptoclostridium difficile).